We begin with the raw amino-acid sequence, 100 residues long: Large ribosomal subunit protein uL23 (100 aa).

This sequence belongs to the universal ribosomal protein uL23 family. Part of the 50S ribosomal subunit. Contacts protein L29, and trigger factor when it is bound to the ribosome.

In terms of biological role, one of the early assembly proteins it binds 23S rRNA. One of the proteins that surrounds the polypeptide exit tunnel on the outside of the ribosome. Forms the main docking site for trigger factor binding to the ribosome. The chain is Large ribosomal subunit protein uL23 from Acaryochloris marina (strain MBIC 11017).